A 285-amino-acid chain; its full sequence is Anamorsin homolog 1 (285 aa).

Residues 1 to 150 (MEATVLLVTD…QKPTWETGSS (150 aa)) form an N-terminal SAM-like domain region. Residues 150-195 (SFSLKKKSVQKQESLPKPGALSVKPEMNVDLEDLIDEESLLSEEDL) form a linker region. Residues Cys-206, Cys-215, Cys-218, and Cys-220 each contribute to the [2Fe-2S] cluster site. The interval 206–220 (CEVSTKRKACKNCTC) is fe-S binding site A. Residues Cys-246, Cys-249, Cys-257, and Cys-260 each contribute to the [4Fe-4S] cluster site. Short sequence motifs (cx2C motif) lie at residues 246–249 (CGNC) and 257–260 (CSSC). Positions 246 to 260 (CGNCGLGDAFRCSSC) are fe-S binding site B.

The protein belongs to the anamorsin family. As to quaternary structure, monomer. [2Fe-2S] cluster is required as a cofactor. The cofactor is [4Fe-4S] cluster.

It is found in the cytoplasm. The protein localises to the mitochondrion intermembrane space. Functionally, component of the cytosolic iron-sulfur (Fe-S) protein assembly (CIA) machinery. Required for the maturation of extramitochondrial Fe-S proteins. Part of an electron transfer chain functioning in an early step of cytosolic Fe-S biogenesis, facilitating the de novo assembly of a [4Fe-4S] cluster on the cytosolic Fe-S scaffold complex. Electrons are transferred from NADPH via a FAD- and FMN-containing diflavin oxidoreductase. Together with the diflavin oxidoreductase, also required for the assembly of the diferric tyrosyl radical cofactor of ribonucleotide reductase (RNR), probably by providing electrons for reduction during radical cofactor maturation in the catalytic small subunit. This is Anamorsin homolog 1 from Picea sitchensis (Sitka spruce).